Here is a 192-residue protein sequence, read N- to C-terminus: Glycerol-3-phosphate acyltransferase (192 aa).

A run of 5 helical transmembrane segments spans residues 5-25, 50-70, 78-98, 112-132, and 153-173; these read VVLI…ITRI, FLAA…VYIA, DFYI…PIWL, ILIA…IIVF, and SFFF…LVFL.

The protein belongs to the PlsY family. As to quaternary structure, probably interacts with PlsX.

The protein localises to the cell membrane. The catalysed reaction is an acyl phosphate + sn-glycerol 3-phosphate = a 1-acyl-sn-glycero-3-phosphate + phosphate. The protein operates within lipid metabolism; phospholipid metabolism. In terms of biological role, catalyzes the transfer of an acyl group from acyl-phosphate (acyl-PO(4)) to glycerol-3-phosphate (G3P) to form lysophosphatidic acid (LPA). This enzyme utilizes acyl-phosphate as fatty acyl donor, but not acyl-CoA or acyl-ACP. The polypeptide is Glycerol-3-phosphate acyltransferase (Wolbachia pipientis wMel).